Consider the following 250-residue polypeptide: Indole-3-glycerol phosphate synthase (250 aa).

Belongs to the TrpC family.

It catalyses the reaction 1-(2-carboxyphenylamino)-1-deoxy-D-ribulose 5-phosphate + H(+) = (1S,2R)-1-C-(indol-3-yl)glycerol 3-phosphate + CO2 + H2O. Its pathway is amino-acid biosynthesis; L-tryptophan biosynthesis; L-tryptophan from chorismate: step 4/5. The chain is Indole-3-glycerol phosphate synthase from Bacillus pumilus (strain SAFR-032).